Here is a 693-residue protein sequence, read N- to C-terminus: Iron-sulfur clusters transporter atm1, mitochondrial (693 aa).

Residues 1-28 constitute a mitochondrion transit peptide; the sequence is MLERCPWKLISSPRNIPARSFLNSRGTY. The Mitochondrial matrix portion of the chain corresponds to 29–118; sequence LVLRKSNILP…PKGKTNLKVR (90 aa). The chain crosses the membrane as a helical span at residues 119–140; it reads VVSALALLVAAKILNVQVPFYF. One can recognise an ABC transmembrane type-1 domain in the interval 119–409; sequence VVSALALLVA…LGSVYREMRQ (291 aa). Residues 141–163 lie on the Mitochondrial intermembrane side of the membrane; it reads KSIIDTMNTTLVQEVGALWSTVG. A helical membrane pass occupies residues 164 to 187; that stretch reads AVVLGYGFARIFSTVFQELRNSVF. The Mitochondrial matrix portion of the chain corresponds to 188 to 236; that stretch reads AIVSQSAIRSVSSNVYQHLLNLDMNFHLSKQTGSITRAMDRGTKGISFI. The chain crosses the membrane as a helical span at residues 237-260; sequence LSSMVLHIIPITLEIAMVSGILTY. K261 is a topological domain (mitochondrial intermembrane). The chain crosses the membrane as a helical span at residues 262 to 282; the sequence is YGPSFSAIAATTVALYALFTV. Topologically, residues 283-348 are mitochondrial matrix; it reads RTTSWRTVFR…ANVKVASSLA (66 aa). Glutathione is bound by residues 288-292 and 351-354; these read RTVFR and NSGQ. Residues 349-367 traverse the membrane as a helical segment; that stretch reads FLNSGQAIIFSTALTLMMY. Residues 368–382 are Mitochondrial intermembrane-facing; sequence MGCRGIVTSNLTVGD. Residues 383–404 traverse the membrane as a helical segment; that stretch reads LVMINQLVFQLSIPLNFLGSVY. A glutathione-binding site is contributed by G401. Residues 405-693 lie on the Mitochondrial matrix side of the membrane; it reads REMRQAFTDM…FGESNKSGDA (289 aa). The 237-residue stretch at 443–679 folds into the ABC transporter domain; the sequence is IQFDNVHFSY…NSVYTSMWHS (237 aa). ATP-binding positions include Y452 and 476-487; that span reads GASGCGKSTILR.

The protein belongs to the ABC transporter superfamily. ABCB family. Heavy Metal importer (TC 3.A.1.210) subfamily. As to quaternary structure, homodimer.

It localises to the mitochondrion inner membrane. Functionally, performs an essential function in the generation of cytoplasmic iron-sulfur proteins by mediating the ATP-dependent export of Fe/S cluster precursors synthesized by nfs1 and other mitochondrial proteins. Hydrolyzes ATP. Binds glutathione and may function by transporting a glutathione-conjugated iron-sulfur compound. This chain is Iron-sulfur clusters transporter atm1, mitochondrial, found in Schizosaccharomyces pombe (strain 972 / ATCC 24843) (Fission yeast).